A 290-amino-acid chain; its full sequence is Glutamyl-Q tRNA(Asp) synthetase (290 aa).

Residues 9–13 (RFAPS) and E45 each bind L-glutamate. The 'HIGH' region motif lies at 12–22 (PSPSGSLHFGS). 4 residues coordinate Zn(2+): C101, C103, Y115, and C119. Residues Y170 and R188 each coordinate L-glutamate. The 'KMSKS' region signature appears at 226-230 (KLSKQ). K229 serves as a coordination point for ATP.

It belongs to the class-I aminoacyl-tRNA synthetase family. GluQ subfamily. It depends on Zn(2+) as a cofactor.

Catalyzes the tRNA-independent activation of glutamate in presence of ATP and the subsequent transfer of glutamate onto a tRNA(Asp). Glutamate is transferred on the 2-amino-5-(4,5-dihydroxy-2-cyclopenten-1-yl) moiety of the queuosine in the wobble position of the QUC anticodon. The polypeptide is Glutamyl-Q tRNA(Asp) synthetase (Shewanella amazonensis (strain ATCC BAA-1098 / SB2B)).